Consider the following 420-residue polypeptide: Ribosome biogenesis protein WDR12 homolog (420 aa).

The segment at 10–92 (VQVHLKTKQE…EDAIEIEYVE (83 aa)) is ubiquitin-like (UBL) domain. WD repeat units follow at residues 104-142 (LHDDWVSAVKARGKWILSGCYDNSLNLWTNKGKHILTIS), 143-185 (GHTA…NAVD), 192-231 (GHERGVDSVSVSPDGLRFATGSWDTMLKVWSAELDDGVEG), 250-288 (GHRESVSAVQWMDATTLLTGSWDYTLKVWDLSLEGIKTE), 290-329 (STNKSIFDASYSKLNRLILTASADKNLRLYDPRTNQGSVV), 335-375 (GHNA…APLY), and 379-417 (GHGDKVLDIDWSNPKYIVSGGVDNSVRVFKSRKALAEDT).

This sequence belongs to the WD repeat WDR12/YTM1 family.

It is found in the nucleus. The protein resides in the nucleolus. It localises to the nucleoplasm. Its function is as follows. Required for maturation of ribosomal RNAs and formation of the large ribosomal subunit. In Drosophila simulans (Fruit fly), this protein is Ribosome biogenesis protein WDR12 homolog.